Here is a 275-residue protein sequence, read N- to C-terminus: Large ribosomal subunit protein uL2 (275 aa).

The interval arginine 221–lysine 275 is disordered. A compositionally biased stretch (basic residues) spans lysine 253–arginine 262.

This sequence belongs to the universal ribosomal protein uL2 family. Part of the 50S ribosomal subunit. Forms a bridge to the 30S subunit in the 70S ribosome.

One of the primary rRNA binding proteins. Required for association of the 30S and 50S subunits to form the 70S ribosome, for tRNA binding and peptide bond formation. It has been suggested to have peptidyltransferase activity; this is somewhat controversial. Makes several contacts with the 16S rRNA in the 70S ribosome. In Wigglesworthia glossinidia brevipalpis, this protein is Large ribosomal subunit protein uL2.